The following is a 490-amino-acid chain: Protein LMBR1L (490 aa).

At 1–21 the chain is on the extracellular side; that stretch reads MEAPDYEVLSVREQLFHERIR. The tract at residues 1 to 59 is interaction with LGB; that stretch reads MEAPDYEVLSVREQLFHERIRECIISTLLFATLYILCHIFLTRFKKPAEFTTVDDEDAT. Residues 1 to 76 are LCN1-binding; the sequence is MEAPDYEVLS…LCTFTLAIAL (76 aa). Residues 22–42 form a helical membrane-spanning segment; the sequence is ECIISTLLFATLYILCHIFLT. The Cytoplasmic segment spans residues 43-66; sequence RFKKPAEFTTVDDEDATVNKIALE. The chain crosses the membrane as a helical span at residues 67–87; sequence LCTFTLAIALGAVLLLPFSII. Topologically, residues 88-114 are extracellular; sequence SNEVLLSLPRNYYIQWLNGSLIHGLWN. Residues 115 to 135 traverse the membrane as a helical segment; that stretch reads LVFLFSNLSLIFLMPFAYFFT. Topologically, residues 136-154 are cytoplasmic; it reads ESEGFAGSRRGVLGRVYET. A helical membrane pass occupies residues 155–175; that stretch reads VVMLMLLTLLVLGMVWVASAI. Over 176–196 the chain is Extracellular; the sequence is LDNNKASRESLYDFWEYYLPY. Residues 197–217 traverse the membrane as a helical segment; that stretch reads LYSCISFLGVLLLLVCTPLGL. The Cytoplasmic portion of the chain corresponds to 218–305; that stretch reads ARMFSVTGKL…NLGYPLAMLC (88 aa). The helical transmembrane segment at 306–326 threads the bilayer; that stretch reads LLVLTGLSVLIVAIHILELLI. At 327–350 the chain is on the extracellular side; it reads DEAAMPRGMQDASLGQVSFSRLGS. A helical membrane pass occupies residues 351 to 371; the sequence is FGAVIQVALIFYLMVSSVVGF. Residues 372-388 are Cytoplasmic-facing; sequence YSSPLFRSLRPRWHDTA. Residues 389–409 traverse the membrane as a helical segment; sequence MTQIIGNCVCLLVLSSALPVF. Topologically, residues 410 to 431 are extracellular; it reads SRTLGLTRFDLLGDFGRFNWLG. A helical transmembrane segment spans residues 432–452; the sequence is NFYIVFLYNAAFAGLTTLCLV. The Cytoplasmic portion of the chain corresponds to 453–490; that stretch reads KTFTAAVRAELIRAFGLDRLPLPVSGFPPRASRKTQHQ.

The protein belongs to the LIMR family. As to quaternary structure, dimer. Can also form higher oligomers. Interacts with LCN1; this interaction mediates the endocytosis of LCN1. Interacts with UBAC2, FAF2, VCP, AMFR, ZNRF3, CTNNB1, LRP6, GSK3A, GSK3B, FZD6, DVL2 and RNF43. Interaction with LGB and SCGB1A1 is controversial.

It localises to the cell membrane. It is found in the endoplasmic reticulum membrane. Plays an essential role in lymphocyte development by negatively regulating the canonical Wnt signaling pathway. In association with UBAC2 and E3 ubiquitin-protein ligase AMFR, promotes the ubiquitin-mediated degradation of CTNNB1 and Wnt receptors FZD6 and LRP6. LMBR1L stabilizes the beta-catenin destruction complex that is required for regulating CTNNB1 levels. Acts as a LCN1 receptor and can mediate its endocytosis. The protein is Protein LMBR1L (LMBR1L) of Pongo abelii (Sumatran orangutan).